The primary structure comprises 472 residues: RNA pseudouridine synthase 6, chloroplastic (472 aa).

A chloroplast-targeting transit peptide spans 1 to 66 (MASPALTGGY…TDSQNQTTLS (66 aa)). In terms of domain architecture, S4 RNA-binding spans 101-208 (VLVSEFISKQ…SPRCYEIDWK (108 aa)). The active site involves Asp-261.

Belongs to the pseudouridine synthase RluA family.

It localises to the plastid. It is found in the chloroplast. The enzyme catalyses a uridine in RNA = a pseudouridine in RNA. In Arabidopsis thaliana (Mouse-ear cress), this protein is RNA pseudouridine synthase 6, chloroplastic.